The primary structure comprises 423 residues: MKEIISRHKAGEQIGICSVCSAHPLVIESALRFDLNSGNKVLIEATSNQVNQFGGYTGMKPADFRDFVYGIAQEVGFPRERLILGGDHLGPNCWQNEPADTAMEKSVELIKAYVAAGFSKIHLDASMSFADDPTPLDPMVVAKRAALLCQAAETTATDEQKRHLTYVIGTEVPVPGGEASAINAVHVTREQDAARTLQTHQAAFRALGLDEALNRVIAIVVQPGVEFDHTQIIHYQPQAAQALSAWIKETPMVYEAHSTDYQTRQAYRALVRDHYAILKVGPALTFALREAIFALAQMENELISPEQRSRVLEVIDEVMLNEPGYWKKYYRPTWSQAMVDIHFSLSDRIRYYWPHPRIRQSVEKLIANLNNVTLPLGLISQFMPVQFERLSEGVLTPTPHNLIIDKIQDVLRAYRFGCTPDVA.

This sequence belongs to the GatZ/KbaZ family. GatZ subfamily. As to quaternary structure, forms a complex with GatY.

It functions in the pathway carbohydrate metabolism; D-tagatose 6-phosphate degradation; D-glyceraldehyde 3-phosphate and glycerone phosphate from D-tagatose 6-phosphate: step 2/2. Component of the tagatose-1,6-bisphosphate aldolase GatYZ that is required for full activity and stability of the Y subunit. Could have a chaperone-like function for the proper and stable folding of GatY. When expressed alone, GatZ does not show any aldolase activity. Is involved in the catabolism of galactitol. The sequence is that of D-tagatose-1,6-bisphosphate aldolase subunit GatZ from Salmonella gallinarum (strain 287/91 / NCTC 13346).